Here is a 266-residue protein sequence, read N- to C-terminus: Translation initiation factor 2 subunit alpha (266 aa).

Residues 12–83 (GDIVIGTVKD…RKGHIDLSLK (72 aa)) form the S1 motif domain.

It belongs to the eIF-2-alpha family. Heterotrimer composed of an alpha, a beta and a gamma chain.

In terms of biological role, eIF-2 functions in the early steps of protein synthesis by forming a ternary complex with GTP and initiator tRNA. The protein is Translation initiation factor 2 subunit alpha (eif2a) of Methanocaldococcus jannaschii (strain ATCC 43067 / DSM 2661 / JAL-1 / JCM 10045 / NBRC 100440) (Methanococcus jannaschii).